A 527-amino-acid polypeptide reads, in one-letter code: MALSTATKAATDALAANRAPTSVNAQEVHRWLQSFNWDFKNNRTKYATKYKMANETKEQFKLIAKEYARMEAVKDERQFGSLQDALTRLNAGVRVHPKWNETMKVVSNFLEVGEYNAIAATGMLWDSAQAAEQKNGYLAQVLDEIRHTHQCAYVNYYFAKNGQDPAGHNDARRTRTIGPLWKGMKRVFSDGFISGDAVECSLNLQLVGEACFTNPLIVAVTEWAAANGDEITPTVFLSIETDELRHMANGYQTVVSIANDPASAKYLNTDLNNAFWTQQKYFTPVLGMLFEYGSKFKVEPWVKTWNRWVYEDWGGIWIGRLGKYGVESPRSLKDAKQDAYWAHHDLYLLAYALWPTGFFRLALPDQEEMEWFEANYPGWYDHYGKIYEEWRARGCEDPSSGFIPLMWFIENNHPIYIDRVSQVPFCPSLAKGASTLRVHEYNGQMHTFSDQWGERMWLAEPERYECQNIFEQYEGRELSEVIAELHGLRSDGKTLIAQPHVRGDKLWTLDDIKRLNCVFKNPVKAFN.

Residues Glu-114, Glu-144, and His-147 each contribute to the Fe cation site. The active site involves Cys-151. Fe cation is bound by residues Glu-209, Glu-243, and His-246.

It belongs to the TmoA/XamoA family. In terms of assembly, m.capsulatus has two forms of methane monooxygenase, a soluble and a membrane-bound type. The soluble type consists of four components (A to D): protein A, comprising three chains, in an alpha-2, beta-2, gamma-2 configuration, is a nonheme iron protein containing an unusual mu-hydroxo bridge structure at its active site and interacts with both oxygen and methane. The cofactor is Fe cation.

The enzyme catalyses methane + NADH + O2 + H(+) = methanol + NAD(+) + H2O. It catalyses the reaction methane + NADPH + O2 + H(+) = methanol + NADP(+) + H2O. Responsible for the initial oxygenation of methane to methanol in methanotrophs. It also catalyzes the monohydroxylation of a variety of unactivated alkenes, alicyclic, aromatic and heterocyclic compounds. This Methylococcus capsulatus (strain ATCC 33009 / NCIMB 11132 / Bath) protein is Methane monooxygenase component A alpha chain (mmoX).